A 107-amino-acid chain; its full sequence is Multidrug resistance protein mmr (107 aa).

Transmembrane regions (helical) follow at residues 2–19 (AYLF…ATTL), 29–51 (LVPT…LSIS), 58–77 (VAYA…IAVL), and 82–104 (PVSV…LNLA).

Belongs to the drug/metabolite transporter (DMT) superfamily. Small multidrug resistance (SMR) (TC 2.A.7.1) family. Mmr subfamily.

Its subcellular location is the cell membrane. Its function is as follows. Multidrug efflux pump. Confers resistance to tetraphenylphosphonium (TPP), erythromycin, ethidium bromide, acriflavine, safranin O and pyronin Y. This Mycobacterium leprae (strain TN) protein is Multidrug resistance protein mmr (mmr).